A 165-amino-acid polypeptide reads, in one-letter code: Crossover junction endodeoxyribonuclease RuvC (165 aa).

Residues Asp7, Glu67, and Asp140 contribute to the active site. Residues Asp7, Glu67, and Asp140 each coordinate Mg(2+).

This sequence belongs to the RuvC family. As to quaternary structure, homodimer which binds Holliday junction (HJ) DNA. The HJ becomes 2-fold symmetrical on binding to RuvC with unstacked arms; it has a different conformation from HJ DNA in complex with RuvA. In the full resolvosome a probable DNA-RuvA(4)-RuvB(12)-RuvC(2) complex forms which resolves the HJ. Mg(2+) is required as a cofactor.

It is found in the cytoplasm. It carries out the reaction Endonucleolytic cleavage at a junction such as a reciprocal single-stranded crossover between two homologous DNA duplexes (Holliday junction).. Functionally, the RuvA-RuvB-RuvC complex processes Holliday junction (HJ) DNA during genetic recombination and DNA repair. Endonuclease that resolves HJ intermediates. Cleaves cruciform DNA by making single-stranded nicks across the HJ at symmetrical positions within the homologous arms, yielding a 5'-phosphate and a 3'-hydroxyl group; requires a central core of homology in the junction. The consensus cleavage sequence is 5'-(A/T)TT(C/G)-3'. Cleavage occurs on the 3'-side of the TT dinucleotide at the point of strand exchange. HJ branch migration catalyzed by RuvA-RuvB allows RuvC to scan DNA until it finds its consensus sequence, where it cleaves and resolves the cruciform DNA. The sequence is that of Crossover junction endodeoxyribonuclease RuvC from Desulfitobacterium hafniense (strain DSM 10664 / DCB-2).